Reading from the N-terminus, the 356-residue chain is Histidinol-phosphate aminotransferase (356 aa).

Residue Lys-214 is modified to N6-(pyridoxal phosphate)lysine.

This sequence belongs to the class-II pyridoxal-phosphate-dependent aminotransferase family. Histidinol-phosphate aminotransferase subfamily. As to quaternary structure, homodimer. Requires pyridoxal 5'-phosphate as cofactor.

The catalysed reaction is L-histidinol phosphate + 2-oxoglutarate = 3-(imidazol-4-yl)-2-oxopropyl phosphate + L-glutamate. It functions in the pathway amino-acid biosynthesis; L-histidine biosynthesis; L-histidine from 5-phospho-alpha-D-ribose 1-diphosphate: step 7/9. In Escherichia coli O127:H6 (strain E2348/69 / EPEC), this protein is Histidinol-phosphate aminotransferase.